Reading from the N-terminus, the 289-residue chain is Methionyl-tRNA formyltransferase (289 aa).

(6S)-5,6,7,8-tetrahydrofolate is bound at residue 106 to 109 (SLLP).

This sequence belongs to the Fmt family.

The catalysed reaction is L-methionyl-tRNA(fMet) + (6R)-10-formyltetrahydrofolate = N-formyl-L-methionyl-tRNA(fMet) + (6S)-5,6,7,8-tetrahydrofolate + H(+). Functionally, attaches a formyl group to the free amino group of methionyl-tRNA(fMet). The formyl group appears to play a dual role in the initiator identity of N-formylmethionyl-tRNA by promoting its recognition by IF2 and preventing the misappropriation of this tRNA by the elongation apparatus. In Mycoplasmopsis pulmonis (strain UAB CTIP) (Mycoplasma pulmonis), this protein is Methionyl-tRNA formyltransferase.